The primary structure comprises 361 residues: Mannose-1-phosphate guanyltransferase 2 (361 aa).

Belongs to the transferase hexapeptide repeat family.

Its subcellular location is the cytoplasm. The enzyme catalyses alpha-D-mannose 1-phosphate + GTP + H(+) = GDP-alpha-D-mannose + diphosphate. It participates in nucleotide-sugar biosynthesis; GDP-alpha-D-mannose biosynthesis; GDP-alpha-D-mannose from alpha-D-mannose 1-phosphate (GTP route): step 1/1. In terms of biological role, involved in cell wall synthesis where it is required for glycosylation. Involved in cell cycle progression through cell-size checkpoint. This chain is Mannose-1-phosphate guanyltransferase 2 (MPG1), found in Candida glabrata (strain ATCC 2001 / BCRC 20586 / JCM 3761 / NBRC 0622 / NRRL Y-65 / CBS 138) (Yeast).